A 60-amino-acid polypeptide reads, in one-letter code: UPF0291 protein Nther_1806 (60 aa).

It belongs to the UPF0291 family.

The protein resides in the cytoplasm. This is UPF0291 protein Nther_1806 from Natranaerobius thermophilus (strain ATCC BAA-1301 / DSM 18059 / JW/NM-WN-LF).